Consider the following 387-residue polypeptide: uncharacterized protein (387 aa).

This sequence belongs to the geranylgeranyl reductase family. ChlP subfamily.

This is an uncharacterized protein from Methanocaldococcus jannaschii (strain ATCC 43067 / DSM 2661 / JAL-1 / JCM 10045 / NBRC 100440) (Methanococcus jannaschii).